A 447-amino-acid polypeptide reads, in one-letter code: Hemogen (447 aa).

Residues 1–91 (MDLGKDQSLS…EMKVELPSQL (91 aa)) are disordered. The tract at residues 7–86 (QSLSKLHQTP…RQQNTEMKVE (80 aa)) is necessary for nuclear localization. Basic and acidic residues-rich tracts occupy residues 14–25 (QTPDHHQEESHV) and 35–49 (RNREQLRKRKAEAQE). Positions 59–78 (EKKHKRQRTGKRSERGRKRQ) are enriched in basic residues. Serine 89 and serine 122 each carry phosphoserine. The segment at 137 to 156 (QESVTLQENSSEYQATAVQN) is disordered. Serine 200 is modified (phosphoserine). Disordered regions lie at residues 210–280 (AKVL…MAVP) and 306–337 (AMSKDPSHKTTQETSVPDKYPPEMYQETPGSE). Residue threonine 217 is modified to Phosphothreonine. The span at 306-316 (AMSKDPSHKTT) shows a compositional bias: basic and acidic residues.

It localises to the nucleus. In terms of biological role, regulates the proliferation and differentiation of hematopoietic cells. Overexpression block the TPA-induced megakaryocytic differentiation in the K562 cell model. May also prevent cell apoptosis through the activation of the nuclear factor-kappa B (NF-kB). The sequence is that of Hemogen (HEMGN) from Bos taurus (Bovine).